A 283-amino-acid chain; its full sequence is MGAISLDGKTTRDEIFVDLKERVAALTAAGRTPGLGTVLVGDDPGSQAYVRGKHADCAKVGINSIRRDLPADITTEQLNETIDELNANPDCTGYIVQLPLPKHLDENAALERIDPAKDADGLHPTNLGRLVLGKQAALPCTPRGIVHLLRRFDVPIAGAHVVVIGRGVTVGRPMGLLLTRRSENATVTLCHTGTRDLPALTRQADIIIAAVGVPHMVTADMVKPGAAVVDVGVSRVDGKLTGDVAPDVWEVAGHVSPNPGGVGPLTRAFLLTNVVEAEESKLA.

NADP(+) is bound by residues 165 to 167 (GRG), T192, and V233.

This sequence belongs to the tetrahydrofolate dehydrogenase/cyclohydrolase family. As to quaternary structure, homodimer.

It carries out the reaction (6R)-5,10-methylene-5,6,7,8-tetrahydrofolate + NADP(+) = (6R)-5,10-methenyltetrahydrofolate + NADPH. It catalyses the reaction (6R)-5,10-methenyltetrahydrofolate + H2O = (6R)-10-formyltetrahydrofolate + H(+). The protein operates within one-carbon metabolism; tetrahydrofolate interconversion. Catalyzes the oxidation of 5,10-methylenetetrahydrofolate to 5,10-methenyltetrahydrofolate and then the hydrolysis of 5,10-methenyltetrahydrofolate to 10-formyltetrahydrofolate. The sequence is that of Bifunctional protein FolD from Mycolicibacterium smegmatis (strain ATCC 700084 / mc(2)155) (Mycobacterium smegmatis).